The following is a 207-amino-acid chain: Ribosomal RNA large subunit methyltransferase E (207 aa).

The S-adenosyl-L-methionine site is built by Gly60, Trp62, Asp80, Asp96, and Asp121. The active-site Proton acceptor is Lys161.

It belongs to the class I-like SAM-binding methyltransferase superfamily. RNA methyltransferase RlmE family.

It localises to the cytoplasm. The enzyme catalyses uridine(2552) in 23S rRNA + S-adenosyl-L-methionine = 2'-O-methyluridine(2552) in 23S rRNA + S-adenosyl-L-homocysteine + H(+). In terms of biological role, specifically methylates the uridine in position 2552 of 23S rRNA at the 2'-O position of the ribose in the fully assembled 50S ribosomal subunit. The protein is Ribosomal RNA large subunit methyltransferase E of Thioalkalivibrio sulfidiphilus (strain HL-EbGR7).